A 104-amino-acid polypeptide reads, in one-letter code: Small ribosomal subunit protein uS10 (104 aa).

The protein belongs to the universal ribosomal protein uS10 family. As to quaternary structure, part of the 30S ribosomal subunit.

Its function is as follows. Involved in the binding of tRNA to the ribosomes. The protein is Small ribosomal subunit protein uS10 of Helicobacter pylori (strain P12).